We begin with the raw amino-acid sequence, 301 residues long: Glucose-1-phosphate adenylyltransferase large subunit (301 aa).

Belongs to the bacterial/plant glucose-1-phosphate adenylyltransferase family. As to quaternary structure, heterotetramer.

The protein resides in the plastid. Its subcellular location is the chloroplast. It is found in the amyloplast. It catalyses the reaction alpha-D-glucose 1-phosphate + ATP + H(+) = ADP-alpha-D-glucose + diphosphate. The protein operates within glycan biosynthesis; starch biosynthesis. Its activity is regulated as follows. Insensitive to 3'phosphoglycerate and orthophosphate. This protein plays a role in synthesis of starch. It catalyzes the synthesis of the activated glycosyl donor, ADP-glucose from Glc-1-P and ATP. The chain is Glucose-1-phosphate adenylyltransferase large subunit (AGA.1) from Triticum aestivum (Wheat).